The sequence spans 368 residues: Ferrochelatase (368 aa).

Fe cation is bound by residues histidine 209 and glutamate 290.

It belongs to the ferrochelatase family.

It localises to the cytoplasm. It catalyses the reaction heme b + 2 H(+) = protoporphyrin IX + Fe(2+). Its pathway is porphyrin-containing compound metabolism; protoheme biosynthesis; protoheme from protoporphyrin-IX: step 1/1. In terms of biological role, catalyzes the ferrous insertion into protoporphyrin IX. The polypeptide is Ferrochelatase (Herminiimonas arsenicoxydans).